An 834-amino-acid polypeptide reads, in one-letter code: MGFLTKKERRVPDLSRYDYHYQNKPAVDSSKYYVPREYGGKRLSASAAAAAIYTNPNPNATGVSRSYSLMHSYNPAAARQPPAGRTYSLRSDRASSITSNSRRPAAGKAQVRRASTQQRRASVDQELGTGVNQPRTNSITVTTTKVRDPQGRTKSITKKTVRRINGYEVVETTTTTTTTEPLPTQNGKMPANMDLVSVEDGTDVEEEHDDGLPSPQAHFDEFSGDFVAEDDLSSEVLQHQQQQYIEDIVEEETEEEEDPGHTGTKRLPGEFNEPPRTNIAARRSNSLTGSLSSLGAKKTISEEVPLDQTSSVSKFSDAMEYIPPTTTTAKPKKSNLRNSMTARKLAQPQQGQNQRRTVSFTQGSIDHMNTTKKKKQPLTEQEMYLQALEVAKKKVYKTDDPAVVGNAANNSNKRVSTMGKRMTLRDSAPVPRSSSMMMNKFHDQGSARNNVAQQQTDVRRSKSMTGSAVPPQAGKKKLTDEEMYEKALEIAQKRYNDLVSADTAAVGAASVGAASAATPVASTAPKKSGFKQRFTKTFHTDDNKSKINNASAGGMVSGGAAAVEVAPGVTTTDPVVAENVNEASQIERMDNVEMASASAANEYAAPAAGFRATSAPLYQSRSAEPVGAYAAPDAPISKYKIVDKILKFAQSNYGYQAHDDEEAAMVAPASAPATAPAGTSMAQPVVVPVERRSSVGKHGNTTTLPVETPLADNASESSFRHTHPQEQPVPLSQIEKKISVVSETGSRKAAPAATAAKTPATAPAMSYGTAKTPFIDIDAVDALSGHVPFEEATRHASVATAATAATGGTTGTAATTGTGTSKKKSFLRKLFGRK.

Disordered regions lie at residues P75–T136, E251–L291, R343–L378, and V458–T479. The span at R343 to M368 shows a compositional bias: polar residues.

It localises to the cell membrane. May be involved in the control of meiotic sister-chromatid recombination. This chain is Meiotic sister-chromatid recombination protein 3 (MSC3), found in Candida glabrata (strain ATCC 2001 / BCRC 20586 / JCM 3761 / NBRC 0622 / NRRL Y-65 / CBS 138) (Yeast).